Consider the following 810-residue polypeptide: Zinc finger CCCH domain-containing protein 11A (810 aa).

C3H1-type zinc fingers lie at residues 2-29, 31-57, and 60-86; these read PNQG…HCEA, IGNE…HMEI, and KRSE…HHNR. S108 carries the post-translational modification Phosphoserine. Glycyl lysine isopeptide (Lys-Gly) (interchain with G-Cter in SUMO2) cross-links involve residues K114 and K124. S132 carries the phosphoserine modification. Disordered stretches follow at residues 139–194, 223–258, 285–351, and 367–432; these read MKVE…GLRV, KKMK…ENVR, GKRK…DKVN, and ERAS…TTCI. K140 is covalently cross-linked (Glycyl lysine isopeptide (Lys-Gly) (interchain with G-Cter in SUMO2)). Residues S149 and S171 each carry the phosphoserine modification. The segment covering 160–175 has biased composition (acidic residues); the sequence is ADDDEDDDDQFSEEGD. Phosphoserine is present on S290. Basic and acidic residues-rich tracts occupy residues 309 to 322 and 367 to 390; these read KKVE…DKTP and ERAS…KTDD. The residue at position 321 (T321) is a Phosphothreonine. Positions 362–423 form a coiled coil; it reads EEILLERASQ…KHRQQEAERQ (62 aa). S370 carries the phosphoserine modification. The span at 391 to 402 shows a compositional bias: polar residues; sequence STSGARSSSTIR. The span at 417-432 shows a compositional bias: basic and acidic residues; sequence QQEAERQKSKKDTTCI. K478 is covalently cross-linked (Glycyl lysine isopeptide (Lys-Gly) (interchain with G-Cter in SUMO2)). The tract at residues 482–549 is disordered; sequence ALRVQQSSES…KEASGETTGV (68 aa). The segment covering 486–498 has biased composition (low complexity); the sequence is QQSSESSTSSPSQ. Residue K619 forms a Glycyl lysine isopeptide (Lys-Gly) (interchain with G-Cter in SUMO2) linkage. The tract at residues 715 to 768 is disordered; sequence TVPEAENPRDSLVLPPTQSSSDSSPPEVSGPSSSQMSMKTRRLSSASTGKPPLS. Over residues 729 to 748 the composition is skewed to low complexity; that stretch reads PPTQSSSDSSPPEVSGPSSS. The segment covering 749-762 has biased composition (polar residues); sequence QMSMKTRRLSSAST.

As to quaternary structure, interacts with TREX complex components THOC2, DDX39 and POLDIP3; the interactions are ATP-dependent. Interacts with PABPN1; this interaction retains ZC3H11A in nuclear speckles. Interacts with KPNA3.

The protein localises to the nucleus. Its subcellular location is the nucleus speckle. Its function is as follows. Through its association with TREX complex components, may participate in the export and post-transcriptional coordination of selected mRNA transcripts, including those required to maintain the metabolic processes in embryonic cells. Binds RNA. Functionally, (Microbial infection) Plays a role in efficient growth of several nuclear-replicating viruses such as HIV-1, influenza virus or herpes simplex virus 1/HHV-1. Required for efficient viral mRNA export. May be required for proper polyadenylation of adenovirus type 5/HAdV-5 capsid mRNA. This chain is Zinc finger CCCH domain-containing protein 11A (ZC3H11A), found in Homo sapiens (Human).